We begin with the raw amino-acid sequence, 1061 residues long: Translation initiation factor IF-2 (1061 aa).

Disordered regions lie at residues 51-199 (FARG…VAVK) and 250-460 (AFQA…IPTE). Positions 67–77 (NEPKPKIDWSR) are enriched in basic and acidic residues. 5 stretches are compositionally biased toward low complexity: residues 97 to 113 (VAAA…KAPV), 120 to 130 (RPSAPRPAVTA), 167 to 177 (VPQPRQPSAVV), 184 to 199 (TPAI…VAVK), and 250 to 278 (AFQA…AEAP). Over residues 279-291 (PVAPEKPAVPAPP) the composition is skewed to pro residues. The segment covering 340-360 (SPGGPGGPGGGYGQRPSGPGG) has biased composition (gly residues). Over residues 381–391 (GFNNGPRPGFG) the composition is skewed to low complexity. Gly residues predominate over residues 392–405 (QRPGGFGQRPGMGA). Residues 552-728 (SRPPVVTVMG…CLVADLGNLK (177 aa)) enclose the tr-type G domain. The tract at residues 561 to 568 (GHVDHGKT) is G1. Residue 561–568 (GHVDHGKT) participates in GTP binding. The tract at residues 586–590 (GITQH) is G2. The interval 614–617 (DTPG) is G3. GTP is bound by residues 614-618 (DTPGH) and 668-671 (NKID). The segment at 668–671 (NKID) is G4. Positions 704–706 (SAK) are G5.

It belongs to the TRAFAC class translation factor GTPase superfamily. Classic translation factor GTPase family. IF-2 subfamily.

The protein localises to the cytoplasm. In terms of biological role, one of the essential components for the initiation of protein synthesis. Protects formylmethionyl-tRNA from spontaneous hydrolysis and promotes its binding to the 30S ribosomal subunits. Also involved in the hydrolysis of GTP during the formation of the 70S ribosomal complex. The chain is Translation initiation factor IF-2 from Acidobacterium capsulatum (strain ATCC 51196 / DSM 11244 / BCRC 80197 / JCM 7670 / NBRC 15755 / NCIMB 13165 / 161).